An 81-amino-acid chain; its full sequence is Cell division protein ZapB (81 aa).

Residues 6–80 (EVFEKLEAKV…LQALLGRMEE (75 aa)) are a coiled coil. Over residues 38 to 47 (SLAQDVQSAQ) the composition is skewed to polar residues. The tract at residues 38 to 67 (SLAQDVQSAQHQREELERENNHLKEQQSGW) is disordered. The segment covering 48 to 62 (HQREELERENNHLKE) has biased composition (basic and acidic residues).

It belongs to the ZapB family. In terms of assembly, homodimer. The ends of the coiled-coil dimer bind to each other, forming polymers. Interacts with FtsZ.

The protein resides in the cytoplasm. Its function is as follows. Non-essential, abundant cell division factor that is required for proper Z-ring formation. It is recruited early to the divisome by direct interaction with FtsZ, stimulating Z-ring assembly and thereby promoting cell division earlier in the cell cycle. Its recruitment to the Z-ring requires functional FtsA or ZipA. The sequence is that of Cell division protein ZapB from Citrobacter koseri (strain ATCC BAA-895 / CDC 4225-83 / SGSC4696).